Here is a 362-residue protein sequence, read N- to C-terminus: Histidinol-phosphate aminotransferase (362 aa).

Lys-219 carries the post-translational modification N6-(pyridoxal phosphate)lysine.

The protein belongs to the class-II pyridoxal-phosphate-dependent aminotransferase family. Histidinol-phosphate aminotransferase subfamily. As to quaternary structure, homodimer. Requires pyridoxal 5'-phosphate as cofactor.

It carries out the reaction L-histidinol phosphate + 2-oxoglutarate = 3-(imidazol-4-yl)-2-oxopropyl phosphate + L-glutamate. The protein operates within amino-acid biosynthesis; L-histidine biosynthesis; L-histidine from 5-phospho-alpha-D-ribose 1-diphosphate: step 7/9. The chain is Histidinol-phosphate aminotransferase from Maricaulis maris (strain MCS10) (Caulobacter maris).